The following is a 214-amino-acid chain: Small ribosomal subunit protein uS3c (214 aa).

The KH type-2 domain maps to 39–111 (IRTYLNKLAK…QITINVVEVE (73 aa)).

Belongs to the universal ribosomal protein uS3 family. Part of the 30S ribosomal subunit.

It is found in the plastid. Its subcellular location is the chloroplast. The polypeptide is Small ribosomal subunit protein uS3c (rps3) (Thalassiosira pseudonana (Marine diatom)).